The following is a 317-amino-acid chain: Melanocyte-stimulating hormone receptor (317 aa).

Residues Met-1 to Glu-37 are Extracellular-facing. N-linked (GlcNAc...) asparagine glycosylation is present at Asn-29. The helical transmembrane segment at Met-38 to Ile-63 threads the bilayer. Over Ala-64–Pro-72 the chain is Cytoplasmic. The chain crosses the membrane as a helical span at residues Met-73–Leu-93. Residues Glu-94–Asn-118 are Extracellular-facing. Residues Val-119–Val-140 traverse the membrane as a helical segment. The Cytoplasmic segment spans residues Asp-141–Arg-163. The chain crosses the membrane as a helical span at residues Ala-164–Tyr-183. Residues Asp-184 to Cys-191 lie on the Extracellular side of the membrane. Residues Leu-192–Leu-211 traverse the membrane as a helical segment. Residues Ala-212–Ala-240 are Cytoplasmic-facing. The chain crosses the membrane as a helical span at residues Ala-241–Leu-266. Over Cys-267–Asn-279 the chain is Extracellular. A helical membrane pass occupies residues Phe-280–Phe-300. Residues Arg-301–Trp-317 lie on the Cytoplasmic side of the membrane. Residue Cys-315 is the site of S-palmitoyl cysteine attachment.

Belongs to the G-protein coupled receptor 1 family. In terms of assembly, interacts with MGRN1, but does not undergo MGRN1-mediated ubiquitination; this interaction competes with GNAS-binding and thus inhibits agonist-induced cAMP production. Interacts with OPN3; the interaction results in a decrease in MC1R-mediated cAMP signaling and ultimately a decrease in melanin production in melanocytes.

It is found in the cell membrane. In terms of biological role, receptor for MSH (alpha, beta and gamma) and ACTH. The activity of this receptor is mediated by G proteins which activate adenylate cyclase. Mediates melanogenesis, the production of eumelanin (black/brown) and phaeomelanin (red/yellow), via regulation of cAMP signaling in melanocytes. The sequence is that of Melanocyte-stimulating hormone receptor (MC1R) from Macaca nemestrina (Pig-tailed macaque).